A 101-amino-acid chain; its full sequence is Small ribosomal subunit protein bS18c (101 aa).

The protein belongs to the bacterial ribosomal protein bS18 family. Part of the 30S ribosomal subunit.

It is found in the plastid. It localises to the chloroplast. The polypeptide is Small ribosomal subunit protein bS18c (Guizotia abyssinica (Niger)).